We begin with the raw amino-acid sequence, 876 residues long: Dynein regulatory complex subunit 7 (876 aa).

2 coiled-coil regions span residues 1–33 (MEVL…ERVT) and 258–295 (KFEQ…AKPD). The segment at 1-40 (MEVLREKVEEEEEAEREEAAERAERTEKLERVTKSAEVSR) is disordered. Over residues 17–40 (EEAAERAERTEKLERVTKSAEVSR) the composition is skewed to basic and acidic residues. The disordered stretch occupies residues 385-412 (SLTEEDEEGLDDDDDDVEDLGKEEEDKS). Acidic residues predominate over residues 387–407 (TEEDEEGLDDDDDDVEDLGKE). 2 coiled-coil regions span residues 679 to 710 (QLKN…EEEE) and 784 to 809 (QRLI…KKQQ).

It belongs to the DRC7 family. In terms of assembly, component of the nexin-dynein regulatory complex (N-DRC). Interacts with TCTE1/DRC5. Interacts with DRC3 and GAS8/DRC4. In terms of tissue distribution, expressed in diplotene and pachytene spermytocytes, and in round and elongating spermatids (at protein level). Strongly expressed in spleen and testis, faintly expressed in kidney, ovary and thymus. As to expression, abundantly expressed in the testis and is weakly expressed in the brain, thymus, lung and ovary. Expressed in ciliated cells.

It localises to the cell projection. It is found in the cilium. The protein localises to the flagellum. Its subcellular location is the cytoplasm. The protein resides in the cytoskeleton. It localises to the cilium axoneme. It is found in the flagellum axoneme. In terms of biological role, component of the nexin-dynein regulatory complex (N-DRC) a key regulator of ciliary/flagellar motility which maintains the alignment and integrity of the distal axoneme and regulates microtubule sliding in motile axonemes. Essential for male fertility, sperm head morphogenesis and sperm flagellum formation. Not required for ciliogenesis in the brain and trachea. In Mus musculus (Mouse), this protein is Dynein regulatory complex subunit 7 (Drc7).